The following is a 370-amino-acid chain: Histidinol-phosphate aminotransferase 1 (370 aa).

K229 is subject to N6-(pyridoxal phosphate)lysine.

Belongs to the class-II pyridoxal-phosphate-dependent aminotransferase family. Histidinol-phosphate aminotransferase subfamily. Homodimer. The cofactor is pyridoxal 5'-phosphate.

It catalyses the reaction L-histidinol phosphate + 2-oxoglutarate = 3-(imidazol-4-yl)-2-oxopropyl phosphate + L-glutamate. It functions in the pathway amino-acid biosynthesis; L-histidine biosynthesis; L-histidine from 5-phospho-alpha-D-ribose 1-diphosphate: step 7/9. The sequence is that of Histidinol-phosphate aminotransferase 1 from Nitrosococcus oceani (strain ATCC 19707 / BCRC 17464 / JCM 30415 / NCIMB 11848 / C-107).